We begin with the raw amino-acid sequence, 314 residues long: Vacuolar membrane protein EC1118_1N9_3125g (314 aa).

The tract at residues Lys32–Ala60 is disordered. Residues Val93–Leu113 traverse the membrane as a helical segment. 3 positions are modified to phosphoserine: Ser148, Ser254, and Ser274. The segment at Glu240–Asn309 is disordered. Residues Ser254–His269 are compositionally biased toward basic and acidic residues.

This sequence belongs to the PRM5 family.

The protein localises to the vacuole membrane. This Saccharomyces cerevisiae (strain Lalvin EC1118 / Prise de mousse) (Baker's yeast) protein is Vacuolar membrane protein EC1118_1N9_3125g.